Consider the following 878-residue polypeptide: Pyruvate, phosphate dikinase (878 aa).

Residues 1-347 (MKKLIYYFGS…LYILQTRTAK (347 aa)) form an N-terminal region. Arg-96 lines the ATP pocket. Positions 348–404 (RTAIAAINIAVQMVEEKLISKEQALMRIDPESLNQLLHTRIDYSKGLTSIAEGLPAS) are linker 1. Positions 405–502 (PGAATGIAVF…VIKQGDIITI (98 aa)) are central. At Thr-457 the chain carries Phosphothreonine; by PDRP1. Residue His-459 is the Tele-phosphohistidine intermediate of the active site. A linker 2 region spans residues 503–537 (DGGSGKIFLGEMPLIQPTFSEESKLILDWADEISS). The C-terminal stretch occupies residues 538 to 878 (LKVRANAETV…AAAQAKIKHG (341 aa)). The substrate site is built by Arg-565, Arg-621, Glu-749, Gly-770, Thr-771, Asn-772, and Asp-773. Glu-749 is a binding site for Mg(2+). A Mg(2+)-binding site is contributed by Asp-773. Cys-835 functions as the Proton donor in the catalytic mechanism.

It belongs to the PEP-utilizing enzyme family. In terms of assembly, homodimer. Mg(2+) serves as cofactor. In terms of processing, phosphorylation of Thr-457 in the dark inactivates the enzyme. Dephosphorylation upon light stimulation reactivates the enzyme.

It carries out the reaction pyruvate + phosphate + ATP = phosphoenolpyruvate + AMP + diphosphate + H(+). Activated by light-induced dephosphorylation. Inhibited by dark-induced phosphorylation. Both reactions are catalyzed by PDRP1. Its function is as follows. Catalyzes the reversible phosphorylation of pyruvate and phosphate. The polypeptide is Pyruvate, phosphate dikinase (ppdK) (Rickettsia conorii (strain ATCC VR-613 / Malish 7)).